Consider the following 568-residue polypeptide: Putative DEAD-box RNA helicase HEL64 (568 aa).

Residues Met-1 to Arg-34 are disordered. Residues Gly-23–Arg-34 are compositionally biased toward basic and acidic residues. The Q motif signature appears at Phe-102 to Ala-130. Residues Trp-133–Ile-307 enclose the Helicase ATP-binding domain. Position 146–153 (Ala-146–Thr-153) interacts with ATP. Residues Asp-255–Asp-258 carry the DEAD box motif. The Helicase C-terminal domain occupies Glu-335 to Asn-483.

The protein belongs to the DEAD box helicase family. DDX5/DBP2 subfamily.

It is found in the nucleus. It carries out the reaction ATP + H2O = ADP + phosphate + H(+). The chain is Putative DEAD-box RNA helicase HEL64 (HEL64) from Trypanosoma brucei brucei.